The following is a 375-amino-acid chain: Alcohol dehydrogenase 1 (375 aa).

Alanine 1 is subject to N-acetylalanine. Residues cysteine 46, histidine 68, cysteine 98, cysteine 101, cysteine 104, cysteine 112, and cysteine 175 each contribute to the Zn(2+) site. Residues 200–205 (GLGGVG), aspartate 224, lysine 229, 293–295 (VGV), and arginine 370 each bind NAD(+).

It belongs to the zinc-containing alcohol dehydrogenase family. Class-I subfamily. As to quaternary structure, homodimer. It depends on Zn(2+) as a cofactor.

The protein localises to the cytoplasm. The enzyme catalyses a primary alcohol + NAD(+) = an aldehyde + NADH + H(+). It carries out the reaction a secondary alcohol + NAD(+) = a ketone + NADH + H(+). This is Alcohol dehydrogenase 1 from Columba livia (Rock dove).